The following is a 319-amino-acid chain: uncharacterized protein (319 aa).

This is an uncharacterized protein from Ictalurid herpesvirus 1 (strain Auburn) (IcHV-1).